A 143-amino-acid chain; its full sequence is Large ribosomal subunit protein uL13 (143 aa).

This sequence belongs to the universal ribosomal protein uL13 family. In terms of assembly, part of the 50S ribosomal subunit.

This protein is one of the early assembly proteins of the 50S ribosomal subunit, although it is not seen to bind rRNA by itself. It is important during the early stages of 50S assembly. This Dehalococcoides mccartyi (strain CBDB1) protein is Large ribosomal subunit protein uL13.